A 149-amino-acid polypeptide reads, in one-letter code: Probable flagellum biosynthesis repressor protein FlbT (149 aa).

Belongs to the FlbT family.

In terms of biological role, has a post-transcriptional repressor function in flagellum biogenesis. Associates with the 5'-UTR of fljK mRNA and promotes its degradation. This is Probable flagellum biosynthesis repressor protein FlbT from Rhizobium leguminosarum bv. trifolii (strain WSM2304).